The following is a 414-amino-acid chain: Serine hydroxymethyltransferase (414 aa).

(6S)-5,6,7,8-tetrahydrofolate-binding positions include L116 and 120-122; that span reads GHL. Position 224 is an N6-(pyridoxal phosphate)lysine (K224). (6S)-5,6,7,8-tetrahydrofolate contacts are provided by residues E240 and 348–350; that span reads SPF.

It belongs to the SHMT family. As to quaternary structure, homodimer. Pyridoxal 5'-phosphate serves as cofactor.

It localises to the cytoplasm. The enzyme catalyses (6R)-5,10-methylene-5,6,7,8-tetrahydrofolate + glycine + H2O = (6S)-5,6,7,8-tetrahydrofolate + L-serine. Its pathway is one-carbon metabolism; tetrahydrofolate interconversion. It functions in the pathway amino-acid biosynthesis; glycine biosynthesis; glycine from L-serine: step 1/1. Its function is as follows. Catalyzes the reversible interconversion of serine and glycine with tetrahydrofolate (THF) serving as the one-carbon carrier. This reaction serves as the major source of one-carbon groups required for the biosynthesis of purines, thymidylate, methionine, and other important biomolecules. Also exhibits THF-independent aldolase activity toward beta-hydroxyamino acids, producing glycine and aldehydes, via a retro-aldol mechanism. The polypeptide is Serine hydroxymethyltransferase (Campylobacter jejuni (strain RM1221)).